The sequence spans 98 residues: MKSSIPITEVLPRAVGSLTFDENYNLLDTSGVAKVIEKSPIAEIIRKSNAELGRLGYSVYEDAQYIGHAFKKAGHFIVYFTPKNKNREGVVPPVGITN.

The protein localises to the cytoplasm. This is an uncharacterized protein from Saccharomyces cerevisiae (strain ATCC 204508 / S288c) (Baker's yeast).